The primary structure comprises 177 residues: ATP synthase subunit delta, chloroplastic (177 aa).

This sequence belongs to the ATPase delta chain family. As to quaternary structure, F-type ATPases have 2 components, F(1) - the catalytic core - and F(0) - the membrane proton channel. F(1) has five subunits: alpha(3), beta(3), gamma(1), delta(1), epsilon(1). CF(0) has four main subunits: a(1), b(1), b'(1) and c(10-14). The alpha and beta chains form an alternating ring which encloses part of the gamma chain. F(1) is attached to F(0) by a central stalk formed by the gamma and epsilon chains, while a peripheral stalk is formed by the delta, b and b' chains.

It localises to the plastid. It is found in the chloroplast thylakoid membrane. F(1)F(0) ATP synthase produces ATP from ADP in the presence of a proton or sodium gradient. F-type ATPases consist of two structural domains, F(1) containing the extramembraneous catalytic core and F(0) containing the membrane proton channel, linked together by a central stalk and a peripheral stalk. During catalysis, ATP synthesis in the catalytic domain of F(1) is coupled via a rotary mechanism of the central stalk subunits to proton translocation. In terms of biological role, this protein is part of the stalk that links CF(0) to CF(1). It either transmits conformational changes from CF(0) to CF(1) or is implicated in proton conduction. The chain is ATP synthase subunit delta, chloroplastic from Galdieria sulphuraria (Red alga).